The sequence spans 470 residues: Glucose-1-phosphate adenylyltransferase (470 aa).

Residues glycine 164, 181-182 (EK), and serine 199 contribute to the alpha-D-glucose 1-phosphate site.

Belongs to the bacterial/plant glucose-1-phosphate adenylyltransferase family. In terms of assembly, homotetramer.

The enzyme catalyses alpha-D-glucose 1-phosphate + ATP + H(+) = ADP-alpha-D-glucose + diphosphate. Its pathway is glycan biosynthesis; glycogen biosynthesis. Involved in the biosynthesis of ADP-glucose, a building block required for the elongation reactions to produce glycogen. Catalyzes the reaction between ATP and alpha-D-glucose 1-phosphate (G1P) to produce pyrophosphate and ADP-Glc. The polypeptide is Glucose-1-phosphate adenylyltransferase (Pseudarthrobacter chlorophenolicus (strain ATCC 700700 / DSM 12829 / CIP 107037 / JCM 12360 / KCTC 9906 / NCIMB 13794 / A6) (Arthrobacter chlorophenolicus)).